The following is a 507-amino-acid chain: RNA-binding protein MEX3B (507 aa).

The tract at residues 1–22 (MPSSLFADMERNGSGGGGGETL) is disordered. KH domains lie at 59 to 120 (MTEC…RREI) and 155 to 216 (QTTI…REEI). 2 disordered regions span residues 256–279 (NQSS…LGSA) and 426–450 (SSSS…GMRR). Over residues 426-446 (SSSSSSSSSSSSSSSSSSSSS) the composition is skewed to low complexity. The segment at 456–496 (CSICFESEVIAALVPCGHNLFCMECANRICEKNQPQCPVCH) adopts an RING-type zinc-finger fold.

It is found in the cytoplasm. The protein localises to the nucleus. The protein resides in the cytoplasmic granule. Its subcellular location is the P-body. In terms of biological role, RNA-binding protein. May be involved in post-transcriptional regulatory mechanisms. The chain is RNA-binding protein MEX3B (mex3b) from Xenopus laevis (African clawed frog).